The chain runs to 509 residues: MDIRAAEISAILKEQIKNFGKEAEVSEVGQVLSVGDGIARVYGLDNVQAGEMVEFPGGIRGMALNLESDNVGVVIFGADRDIKEGDIVKRTGAIVDVPVGPGLLGRVVDALGNPIDGKGPIVATERRRVDVKAPGIIPRKSVHEPMSTGLKAVDALIPVGRGQRELVIGDRQTGKTAIILDTFLNQKPIHDNGPDSEKLYCVYVAIGQKRSTVAQFVKVLEERGALEYSIVIAATASDPAPMQYLAPFAGCAMGEYFRDNSMHALIGYDDLSKQAVAYRQMSLLLRRPPGREAYPGDVFYLHSRLLERAAKLNDENGAGSLTALPVIETQGNDVSAFIPTNVISITDGQIFLETNLFYQGIRPAVNVGLSVSRVGSSAQVKAMKQVAGSIKGELAQYREMAAFAQFGSDLDASTQRLLNRGARLTELLKQPQFSPLKTEEQVAVIFAGVNGYLDKIAVNQVGKFEAGLLSSLRTEHKDVLDAIRDEKALTDNIKAKLKAAVDAFAKSFA.

169 to 176 lines the ATP pocket; sequence GDRQTGKT.

This sequence belongs to the ATPase alpha/beta chains family. F-type ATPases have 2 components, CF(1) - the catalytic core - and CF(0) - the membrane proton channel. CF(1) has five subunits: alpha(3), beta(3), gamma(1), delta(1), epsilon(1). CF(0) has three main subunits: a(1), b(2) and c(9-12). The alpha and beta chains form an alternating ring which encloses part of the gamma chain. CF(1) is attached to CF(0) by a central stalk formed by the gamma and epsilon chains, while a peripheral stalk is formed by the delta and b chains.

The protein localises to the cell inner membrane. It catalyses the reaction ATP + H2O + 4 H(+)(in) = ADP + phosphate + 5 H(+)(out). Functionally, produces ATP from ADP in the presence of a proton gradient across the membrane. The alpha chain is a regulatory subunit. The chain is ATP synthase subunit alpha from Brucella anthropi (strain ATCC 49188 / DSM 6882 / CCUG 24695 / JCM 21032 / LMG 3331 / NBRC 15819 / NCTC 12168 / Alc 37) (Ochrobactrum anthropi).